The following is a 226-amino-acid chain: Ribose-5-phosphate isomerase A (226 aa).

Substrate contacts are provided by residues 33–36 (TGST), 86–89 (DGAD), and 99–102 (KGGG). Residue Glu108 is the Proton acceptor of the active site. Lys126 serves as a coordination point for substrate.

It belongs to the ribose 5-phosphate isomerase family. In terms of assembly, homodimer.

The catalysed reaction is aldehydo-D-ribose 5-phosphate = D-ribulose 5-phosphate. It participates in carbohydrate degradation; pentose phosphate pathway; D-ribose 5-phosphate from D-ribulose 5-phosphate (non-oxidative stage): step 1/1. Functionally, catalyzes the reversible conversion of ribose-5-phosphate to ribulose 5-phosphate. The protein is Ribose-5-phosphate isomerase A of Bordetella pertussis (strain Tohama I / ATCC BAA-589 / NCTC 13251).